The sequence spans 154 residues: Metallothiol transferase FosB (154 aa).

In terms of domain architecture, VOC spans Gly-8–Gly-123. Mg(2+) is bound by residues His-11, His-70, and Glu-119. Glu-119 acts as the Proton donor/acceptor in catalysis.

The protein belongs to the fosfomycin resistance protein family. FosB subfamily. As to quaternary structure, homodimer. Requires Mg(2+) as cofactor.

It is found in the cytoplasm. Functionally, metallothiol transferase which confers resistance to fosfomycin by catalyzing the addition of a thiol cofactor to fosfomycin. L-cysteine is probably the physiological thiol donor. The sequence is that of Metallothiol transferase FosB from Bacillus licheniformis (strain ATCC 14580 / DSM 13 / JCM 2505 / CCUG 7422 / NBRC 12200 / NCIMB 9375 / NCTC 10341 / NRRL NRS-1264 / Gibson 46).